The chain runs to 268 residues: Small ribosomal subunit protein eS1 (268 aa).

The segment at 1–21 (MAVGKNKGLSKGGKKGGKKKV) is disordered.

The protein belongs to the eukaryotic ribosomal protein eS1 family. In terms of assembly, component of the small ribosomal subunit. Mature ribosomes consist of a small (40S) and a large (60S) subunit. The 40S subunit contains about 33 different proteins and 1 molecule of RNA (18S). The 60S subunit contains about 49 different proteins and 3 molecules of RNA (28S, 5.8S and 5S).

The protein resides in the cytoplasm. Essential for oogenesis; required for late follicle cell development. The protein is Small ribosomal subunit protein eS1 of Drosophila willistoni (Fruit fly).